The following is a 151-amino-acid chain: Transcriptional regulator MraZ (151 aa).

SpoVT-AbrB domains follow at residues 5–51 and 81–124; these read AHEL…PVAE and AEIL…GREQ.

It belongs to the MraZ family. As to quaternary structure, forms oligomers.

It localises to the cytoplasm. Its subcellular location is the nucleoid. The polypeptide is Transcriptional regulator MraZ (Neisseria meningitidis serogroup C / serotype 2a (strain ATCC 700532 / DSM 15464 / FAM18)).